The sequence spans 131 residues: Small ribosomal subunit protein eS8 (131 aa).

Positions 1 to 38 are disordered; the sequence is MKLGAYYKGGDLKKPSGGKKRKVRRTKKKALGGGPPQI. The span at 16 to 30 shows a compositional bias: basic residues; sequence SGGKKRKVRRTKKKA.

This sequence belongs to the eukaryotic ribosomal protein eS8 family. As to quaternary structure, part of the 30S ribosomal subunit.

The protein is Small ribosomal subunit protein eS8 of Pyrobaculum arsenaticum (strain DSM 13514 / JCM 11321 / PZ6).